We begin with the raw amino-acid sequence, 491 residues long: Chromosomal replication initiator protein DnaA (491 aa).

The domain I, interacts with DnaA modulators stretch occupies residues 1–69; it reads MTTWDKCLKK…TIQECHGNDL (69 aa). Residues 69–154 form a domain II region; sequence LIIEYSNKKF…KEDEEYSFGL (86 aa). Positions 155 to 371 are domain III, AAA+ region; sequence PLKEKYVFDS…GALNRVLTTS (217 aa). Glycine 199, glycine 201, lysine 202, and threonine 203 together coordinate ATP. The interval 372 to 491 is domain IV, binds dsDNA; the sequence is KFNHKDPTIE…YELLLDKISR (120 aa).

The protein belongs to the DnaA family. Oligomerizes as a right-handed, spiral filament on DNA at oriC.

It localises to the cytoplasm. Functionally, plays an essential role in the initiation and regulation of chromosomal replication. ATP-DnaA binds to the origin of replication (oriC) to initiate formation of the DNA replication initiation complex once per cell cycle. Binds the DnaA box (a 9 base pair repeat at the origin) and separates the double-stranded (ds)DNA. Forms a right-handed helical filament on oriC DNA; dsDNA binds to the exterior of the filament while single-stranded (ss)DNA is stabiized in the filament's interior. The ATP-DnaA-oriC complex binds and stabilizes one strand of the AT-rich DNA unwinding element (DUE), permitting loading of DNA polymerase. After initiation quickly degrades to an ADP-DnaA complex that is not apt for DNA replication. Binds acidic phospholipids. The sequence is that of Chromosomal replication initiator protein DnaA from Francisella tularensis subsp. holarctica (strain LVS).